A 154-amino-acid chain; its full sequence is MHCPFCRHPDSRVVDSREADEGQAIRRRRSCPECGRRFTTVETAVLSVVKRSGVTEPFSREKVVRGVRRACQGRQVDNDALNLLAQQVEDAVRASGSAEIPSNEVGLAILGPLRDLDEVAYLRFASVYRSFSSAEDFAREIKELREHRESRDDA.

A zinc finger lies at 3–34 (CPFCRHPDSRVVDSREADEGQAIRRRRSCPEC). One can recognise an ATP-cone domain in the interval 46 to 136 (LSVVKRSGVT…VYRSFSSAED (91 aa)).

It belongs to the NrdR family. The cofactor is Zn(2+).

Its function is as follows. Negatively regulates transcription of bacterial ribonucleotide reductase nrd genes and operons by binding to NrdR-boxes. The protein is Transcriptional repressor NrdR of Rhodococcus jostii (strain RHA1).